The chain runs to 152 residues: LILCVVVCTAAVLGTAAGYESQLPGCPPGAYPAICARYCYSDRDCASGYYCCNTGCLNICVPKPKPGLCPSITQSPCRGNVCNNDQDCPGNRKCCGKPGCKRCYRPKKPGSCPARKYEAGPCVVYCDGDFDCPGDKKCCGGCPRLCEKPCYD.

A signal peptide spans 1-18 (LILCVVVCTAAVLGTAAG). The 43-residue stretch at 19 to 61 (YESQLPGCPPGAYPAICARYCYSDRDCASGYYCCNTGCLNICV) folds into the WAP 1 domain. Disulfide bonds link C26–C52, C35–C56, C39–C51, C45–C60, C69–C95, C77–C100, C82–C94, C88–C103, C112–C139, C122–C142, C126–C138, and C132–C146. Residues 62-107 (PKPKPGLCPSITQSPCRGNVCNNDQDCPGNRKCCGKPGCKRCYRPK) form the WAP 2; atypical domain. The region spanning 108-150 (KPGSCPARKYEAGPCVVYCDGDFDCPGDKKCCGGCPRLCEKPC) is the WAP 3 domain.

Component of the acid-soluble and acid-insoluble organic matrix of prismatic shell layers (at protein level).

It is found in the secreted. Its function is as follows. Inhibits growth of calcium carbonate crystals. May inhibit growth of certain crystallographic planes in the mineral phase of nacre in the shell. This chain is Perlwapin, found in Haliotis asinina (Donkey's ear abalone).